A 445-amino-acid chain; its full sequence is MEFKLEEHFNKTFVTENNTAAARNAAFPAWEDYRGSVDDLQYFLIGLYTFVSLLGFMGNLLILMAVMKKRNQKTTVNFLIGNLAFSDILVVLFCSPFTLTSVLLDQWMFGKAMCHIMPFLQCVSVLVSTLILISIAIVRYHMIKHPISNNLTANHGYFLIATVWTLGFAICSPLPVFHSLVELKETFGSALLSSKYLCVESWPSDSYRIAFTISLLLVQYILPLVCLTVSHTSVCRSISCGLSHKENRLEENEMINLTLQPSKKSRNQAKTPSTQKWSYSFIRKHRRRYSKKTACVLPAPAGPSQGKHLAVPENPASVRSQLSPSSKVIPGVPICFEVKPEESSDAHEMRVKRSITRIKKRSRSVFYRLTILILVFAVSWMPLHVFHVVTDFNDNLISNRHFKLVYCICHLLGMMSCCLNPILYGFLNNGIKADLRALIHCLHMS.

The Extracellular portion of the chain corresponds to 1–42 (MEFKLEEHFNKTFVTENNTAAARNAAFPAWEDYRGSVDDLQY). Asn-10 and Asn-17 each carry an N-linked (GlcNAc...) asparagine glycan. Residues 43 to 63 (FLIGLYTFVSLLGFMGNLLIL) traverse the membrane as a helical segment. Topologically, residues 64–77 (MAVMKKRNQKTTVN) are cytoplasmic. Residues 78 to 98 (FLIGNLAFSDILVVLFCSPFT) form a helical membrane-spanning segment. At 99–117 (LTSVLLDQWMFGKAMCHIM) the chain is on the extracellular side. Cysteines 114 and 198 form a disulfide. The chain crosses the membrane as a helical span at residues 118–138 (PFLQCVSVLVSTLILISIAIV). The Cytoplasmic portion of the chain corresponds to 139–156 (RYHMIKHPISNNLTANHG). A helical membrane pass occupies residues 157–177 (YFLIATVWTLGFAICSPLPVF). The Extracellular portion of the chain corresponds to 178–208 (HSLVELKETFGSALLSSKYLCVESWPSDSYR). A helical transmembrane segment spans residues 209–229 (IAFTISLLLVQYILPLVCLTV). At 230–368 (SHTSVCRSIS…KKRSRSVFYR (139 aa)) the chain is on the cytoplasmic side. A helical transmembrane segment spans residues 369 to 389 (LTILILVFAVSWMPLHVFHVV). At 390–406 (TDFNDNLISNRHFKLVY) the chain is on the extracellular side. Residues 407–427 (CICHLLGMMSCCLNPILYGFL) traverse the membrane as a helical segment. Residues 428-445 (NNGIKADLRALIHCLHMS) are Cytoplasmic-facing. Cys-441 carries S-palmitoyl cysteine lipidation.

Belongs to the G-protein coupled receptor 1 family. As to expression, brain; hypothalamus.

The protein resides in the cell membrane. In terms of biological role, receptor for neuropeptide Y and peptide YY. The activity of this receptor is mediated by G proteins that inhibit adenylate cyclase activity. Seems to be associated with food intake. Could be involved in feeding disorders. This is Neuropeptide Y receptor type 5 (Npy5r) from Rattus norvegicus (Rat).